Here is a 347-residue protein sequence, read N- to C-terminus: Protein RecA (347 aa).

65-72 (GPESSGKT) is a binding site for ATP. Residues 328-347 (SPAQPEAPAAGEKPEQEEEF) form a disordered region.

It belongs to the RecA family.

The protein resides in the cytoplasm. Functionally, can catalyze the hydrolysis of ATP in the presence of single-stranded DNA, the ATP-dependent uptake of single-stranded DNA by duplex DNA, and the ATP-dependent hybridization of homologous single-stranded DNAs. It interacts with LexA causing its activation and leading to its autocatalytic cleavage. The chain is Protein RecA from Vibrio parahaemolyticus serotype O3:K6 (strain RIMD 2210633).